Consider the following 517-residue polypeptide: Cytochrome P450 1A1 (517 aa).

The segment at 34–45 (WQPRVPKGLKSP) is mitochondrial targeting signal. Ser-72 carries an O-linked (GlcNAc) serine glycan. Position 229 (Phe-229) interacts with substrate. A heme-binding site is contributed by Cys-462.

It belongs to the cytochrome P450 family. Interacts with cytosolic chaperones HSP70 and HSP90; this interaction is required for initial targeting to mitochondria. Interacts (via mitochondrial targeting signal) with TOMM40 (via N-terminus); this interaction is required for translocation across the mitochondrial outer membrane. Requires heme as cofactor.

It is found in the endoplasmic reticulum membrane. It localises to the mitochondrion inner membrane. The protein localises to the microsome membrane. Its subcellular location is the cytoplasm. It carries out the reaction an organic molecule + reduced [NADPH--hemoprotein reductase] + O2 = an alcohol + oxidized [NADPH--hemoprotein reductase] + H2O + H(+). It catalyses the reaction estrone + reduced [NADPH--hemoprotein reductase] + O2 = 2-hydroxyestrone + oxidized [NADPH--hemoprotein reductase] + H2O + H(+). The enzyme catalyses estrone + reduced [NADPH--hemoprotein reductase] + O2 = 4-hydroxyestrone + oxidized [NADPH--hemoprotein reductase] + H2O + H(+). The catalysed reaction is estrone + reduced [NADPH--hemoprotein reductase] + O2 = 6alpha-hydroxyestrone + oxidized [NADPH--hemoprotein reductase] + H2O + H(+). It carries out the reaction estrone + reduced [NADPH--hemoprotein reductase] + O2 = 15alpha-hydroxyestrone + oxidized [NADPH--hemoprotein reductase] + H2O + H(+). It catalyses the reaction estrone + reduced [NADPH--hemoprotein reductase] + O2 = 16alpha-hydroxyestrone + oxidized [NADPH--hemoprotein reductase] + H2O + H(+). The enzyme catalyses 17beta-estradiol + reduced [NADPH--hemoprotein reductase] + O2 = 2-hydroxy-17beta-estradiol + oxidized [NADPH--hemoprotein reductase] + H2O + H(+). The catalysed reaction is 17beta-estradiol + reduced [NADPH--hemoprotein reductase] + O2 = 4-hydroxy-17beta-estradiol + oxidized [NADPH--hemoprotein reductase] + H2O + H(+). It carries out the reaction 17beta-estradiol + reduced [NADPH--hemoprotein reductase] + O2 = 6alpha-hydroxy-17beta-estradiol + oxidized [NADPH--hemoprotein reductase] + H2O + H(+). It catalyses the reaction 17beta-estradiol + reduced [NADPH--hemoprotein reductase] + O2 = 7alpha-hydroxy-17beta-estradiol + oxidized [NADPH--hemoprotein reductase] + H2O + H(+). The enzyme catalyses 17beta-estradiol + reduced [NADPH--hemoprotein reductase] + O2 = 15alpha-hydroxy-17beta-estradiol + oxidized [NADPH--hemoprotein reductase] + H2O + H(+). The catalysed reaction is (5Z,8Z,11Z)-eicosatrienoate + reduced [NADPH--hemoprotein reductase] + O2 = 19-hydroxy-(5Z,8Z,11Z)-eicosatrienoate + oxidized [NADPH--hemoprotein reductase] + H2O + H(+). It carries out the reaction (5Z,8Z,11Z,14Z)-eicosatetraenoate + reduced [NADPH--hemoprotein reductase] + O2 = 16-hydroxy-(5Z,8Z,11Z,14Z)-eicosatetraenoate + oxidized [NADPH--hemoprotein reductase] + H2O + H(+). It catalyses the reaction (5Z,8Z,11Z,14Z)-eicosatetraenoate + reduced [NADPH--hemoprotein reductase] + O2 = 17-hydroxy-(5Z,8Z,11Z,14Z)-eicosatetraenoate + oxidized [NADPH--hemoprotein reductase] + H2O + H(+). The enzyme catalyses (5Z,8Z,11Z,14Z)-eicosatetraenoate + reduced [NADPH--hemoprotein reductase] + O2 = 18-hydroxy-(5Z,8Z,11Z,14Z)-eicosatetraenoate + oxidized [NADPH--hemoprotein reductase] + H2O + H(+). The catalysed reaction is (5Z,8Z,11Z,14Z)-eicosatetraenoate + reduced [NADPH--hemoprotein reductase] + O2 = 19-hydroxy-(5Z,8Z,11Z,14Z)-eicosatetraenoate + oxidized [NADPH--hemoprotein reductase] + H2O + H(+). It carries out the reaction (5Z,8Z,11Z,14Z,17Z)-eicosapentaenoate + reduced [NADPH--hemoprotein reductase] + O2 = 19-hydroxy-(5Z,8Z,11Z,14Z,17Z)-eicosapentaenoate + oxidized [NADPH--hemoprotein reductase] + H2O + H(+). It catalyses the reaction (5Z,8Z,11Z,14Z)-eicosatetraenoate + reduced [NADPH--hemoprotein reductase] + O2 = (8R,9S)-epoxy-(5Z,11Z,14Z)-eicosatrienoate + oxidized [NADPH--hemoprotein reductase] + H2O + H(+). The enzyme catalyses (5Z,8Z,11Z,14Z)-eicosatetraenoate + reduced [NADPH--hemoprotein reductase] + O2 = (11R,12S)-epoxy-(5Z,8Z,14Z)-eicosatrienoate + oxidized [NADPH--hemoprotein reductase] + H2O + H(+). The catalysed reaction is (5Z,8Z,11Z,14Z)-eicosatetraenoate + reduced [NADPH--hemoprotein reductase] + O2 = (14S,15R)-epoxy-(5Z,8Z,11Z)-eicosatrienoate + oxidized [NADPH--hemoprotein reductase] + H2O + H(+). It carries out the reaction (5Z,8Z,11Z,14Z)-eicosatetraenoate + reduced [NADPH--hemoprotein reductase] + O2 = (14R,15S)-epoxy-(5Z,8Z,11Z)-eicosatrienoate + oxidized [NADPH--hemoprotein reductase] + H2O + H(+). It catalyses the reaction (5Z,8Z,11Z,14Z,17Z)-eicosapentaenoate + reduced [NADPH--hemoprotein reductase] + O2 = (17R,18S)-epoxy-(5Z,8Z,11Z,14Z)-eicosatetraenoate + oxidized [NADPH--hemoprotein reductase] + H2O + H(+). The enzyme catalyses (4Z,7Z,10Z,13Z,16Z,19Z)-docosahexaenoate + reduced [NADPH--hemoprotein reductase] + O2 = (19S,20R)-epoxy-(4Z,7Z,10Z,13Z,16Z)-docosapentaenoate + oxidized [NADPH--hemoprotein reductase] + H2O + H(+). The catalysed reaction is (4Z,7Z,10Z,13Z,16Z,19Z)-docosahexaenoate + reduced [NADPH--hemoprotein reductase] + O2 = (19R,20S)-epoxy-(4Z,7Z,10Z,13Z,16Z)-docosapentaenoate + oxidized [NADPH--hemoprotein reductase] + H2O + H(+). It carries out the reaction all-trans-retinol + reduced [NADPH--hemoprotein reductase] + O2 = all-trans-retinal + oxidized [NADPH--hemoprotein reductase] + 2 H2O + H(+). It catalyses the reaction all-trans-retinal + reduced [NADPH--hemoprotein reductase] + O2 = all-trans-retinoate + oxidized [NADPH--hemoprotein reductase] + H2O + 2 H(+). The enzyme catalyses (13S)-hydroperoxy-(9Z,11E)-octadecadienoate = 13-oxo-(9Z,11E)-octadecadienoate + H2O. The catalysed reaction is (12S)-hydroperoxy-(5Z,8Z,10E,14Z)-eicosatetraenoate = 12-oxo-(5Z,8Z,10E,14Z)-eicosatetraenoate + H2O. It carries out the reaction (15S)-hydroperoxy-(5Z,8Z,11Z,13E)-eicosatetraenoate = 15-oxo-(5Z,8Z,11Z,13E)-eicosatetraenoate + H2O. It catalyses the reaction (5S)-hydroperoxy-(6E,8Z,11Z,14Z)-eicosatetraenoate = 5-oxo-(6E,8Z,11Z,14Z)-eicosatetraenoate + H2O. It functions in the pathway steroid hormone biosynthesis. It participates in lipid metabolism; fatty acid metabolism. The protein operates within cofactor metabolism; retinol metabolism. A cytochrome P450 monooxygenase involved in the metabolism of various endogenous substrates, including fatty acids, steroid hormones and vitamins. Mechanistically, uses molecular oxygen inserting one oxygen atom into a substrate, and reducing the second into a water molecule, with two electrons provided by NADPH via cytochrome P450 reductase (CPR; NADPH-ferrihemoprotein reductase). Catalyzes the hydroxylation of carbon-hydrogen bonds. Exhibits high catalytic activity for the formation of hydroxyestrogens from estrone (E1) and 17beta-estradiol (E2), namely 2-hydroxy E1 and E2, as well as D-ring hydroxylated E1 and E2 at the C15alpha and C16alpha positions. Displays different regioselectivities for polyunsaturated fatty acids (PUFA) hydroxylation. Catalyzes the epoxidation of double bonds of certain PUFA. Converts arachidonic acid toward epoxyeicosatrienoic acid (EET) regioisomers, 8,9-, 11,12-, and 14,15-EET, that function as lipid mediators in the vascular system. Displays an absolute stereoselectivity in the epoxidation of eicosapentaenoic acid (EPA) producing the 17(R),18(S) enantiomer. May play an important role in all-trans retinoic acid biosynthesis in extrahepatic tissues. Catalyzes two successive oxidative transformation of all-trans retinol to all-trans retinal and then to the active form all-trans retinoic acid. May also participate in eicosanoids metabolism by converting hydroperoxide species into oxo metabolites (lipoxygenase-like reaction, NADPH-independent). The protein is Cytochrome P450 1A1 (CYP1A1) of Felis catus (Cat).